A 201-amino-acid chain; its full sequence is Sec-independent protein translocase protein TatB (201 aa).

The helical transmembrane segment at 1–21 (MLDLGWSEILVIAVVLIVVVG) threads the bilayer. The disordered stretch occupies residues 96–201 (LSEAAKAKPA…RRKKTAGTAP (106 aa)). 2 stretches are compositionally biased toward low complexity: residues 102-114 (AKPA…AADS) and 159-187 (TSAK…APAK). The span at 189–201 (PSPRRKKTAGTAP) shows a compositional bias: basic residues.

It belongs to the TatB family. In terms of assembly, the Tat system comprises two distinct complexes: a TatABC complex, containing multiple copies of TatA, TatB and TatC subunits, and a separate TatA complex, containing only TatA subunits. Substrates initially bind to the TatABC complex, which probably triggers association of the separate TatA complex to form the active translocon.

Its subcellular location is the cell inner membrane. Part of the twin-arginine translocation (Tat) system that transports large folded proteins containing a characteristic twin-arginine motif in their signal peptide across membranes. Together with TatC, TatB is part of a receptor directly interacting with Tat signal peptides. TatB may form an oligomeric binding site that transiently accommodates folded Tat precursor proteins before their translocation. The chain is Sec-independent protein translocase protein TatB from Chelativorans sp. (strain BNC1).